The primary structure comprises 680 residues: DNA-directed RNA polymerase subunit beta' (680 aa).

Zn(2+) is bound by residues Cys-69, Cys-71, Cys-87, and Cys-90. Positions 489, 491, and 493 each coordinate Mg(2+).

It belongs to the RNA polymerase beta' chain family. RpoC1 subfamily. In terms of assembly, in plastids the minimal PEP RNA polymerase catalytic core is composed of four subunits: alpha, beta, beta', and beta''. When a (nuclear-encoded) sigma factor is associated with the core the holoenzyme is formed, which can initiate transcription. The cofactor is Mg(2+). Zn(2+) serves as cofactor.

The protein resides in the plastid. It is found in the chloroplast. It carries out the reaction RNA(n) + a ribonucleoside 5'-triphosphate = RNA(n+1) + diphosphate. DNA-dependent RNA polymerase catalyzes the transcription of DNA into RNA using the four ribonucleoside triphosphates as substrates. This chain is DNA-directed RNA polymerase subunit beta', found in Arabis hirsuta (Hairy rock-cress).